The following is a 1044-amino-acid chain: Isoleucine--tRNA ligase (1044 aa).

The 'HIGH' region signature appears at 48–58 (PFATGLPHFGH). A 'KMSKS' region motif is present at residues 594–598 (KMSKS). Lys597 provides a ligand contact to ATP.

The protein belongs to the class-I aminoacyl-tRNA synthetase family. IleS type 2 subfamily. As to quaternary structure, monomer. Zn(2+) serves as cofactor.

The protein localises to the cytoplasm. The catalysed reaction is tRNA(Ile) + L-isoleucine + ATP = L-isoleucyl-tRNA(Ile) + AMP + diphosphate. Functionally, catalyzes the attachment of isoleucine to tRNA(Ile). As IleRS can inadvertently accommodate and process structurally similar amino acids such as valine, to avoid such errors it has two additional distinct tRNA(Ile)-dependent editing activities. One activity is designated as 'pretransfer' editing and involves the hydrolysis of activated Val-AMP. The other activity is designated 'posttransfer' editing and involves deacylation of mischarged Val-tRNA(Ile). In Borrelia hermsii (strain HS1 / DAH), this protein is Isoleucine--tRNA ligase.